Reading from the N-terminus, the 122-residue chain is Heat-labile enterotoxin IIB, B chain (122 aa).

The signal sequence occupies residues 1–23 (MSFKKIIKAFVIMAALVSVQAHA). Cysteine 33 and cysteine 104 form a disulfide bridge.

As to quaternary structure, heterohexamer of one A chain and of five B chains.

Its function is as follows. The biological activity of the toxin is produced by the A chain, which activates intracellular adenyl cyclase. The chain is Heat-labile enterotoxin IIB, B chain from Escherichia coli.